Reading from the N-terminus, the 610-residue chain is MCGIVGYVGQKKATDILVEGLSKLEYRGYDSAGVAVLEDNKIKAEKHKGRLANLEGMLNENPIEGGIGIGHTRWATHGEPSDVNSHPHLNNKETIAVVHNGIIENYNELRNWLMEKGYEFKSETDTEVIPNLVDFYYKGDLLDAVMEATKHMEGSYAIGVICNDEPEKLVAVRKDSPLIVGLGEKEYFIASDIPAVLNHTREVYLLEDKEFVVLTNDGVTLFDEEKNPVEKEVYHITWNVDAAEKGGYEDFMLKEINEQPKAIKDTMTSRIMEEKEVTLDDISITKEYLDNVDRVYIVACGTAYHAGVIGKYAIEKLVRIPVEVDIASEFRYRDAVITDKTLIIVLSQSGETADTLAVLRDGQAKGARVLAVTNVVGSSVSREANDVLYTWAGPEIAVASTKAYVTQLIAMYTLALHFAELKGSKSVEEIEEIKKAMLELPEKVEEILKNTDLIKEFAVKASTEKDLYFLGRGMDYGVAMEGSLKLKEISYIHSEAYAGGELKHGPIALIEKDIPVISLLTQRELMDKMISNVQEVVTRGANVLGVCFKGDMEESKRKMFEGLIEIPETLSLLSPVLSVVPLQLFSYYVAKAKGFDVDKPRNLAKSVTVE.

C2 acts as the Nucleophile; for GATase activity in catalysis. A Glutamine amidotransferase type-2 domain is found at 2–217; the sequence is CGIVGYVGQK…DKEFVVLTND (216 aa). SIS domains follow at residues 284–424 and 453–600; these read ITKE…LKGS and LIKE…VDKP. The For Fru-6P isomerization activity role is filled by K605.

As to quaternary structure, homodimer.

Its subcellular location is the cytoplasm. The enzyme catalyses D-fructose 6-phosphate + L-glutamine = D-glucosamine 6-phosphate + L-glutamate. Catalyzes the first step in hexosamine metabolism, converting fructose-6P into glucosamine-6P using glutamine as a nitrogen source. This Clostridium perfringens (strain 13 / Type A) protein is Glutamine--fructose-6-phosphate aminotransferase [isomerizing].